A 433-amino-acid chain; its full sequence is Enolase (433 aa).

Residue glutamine 167 participates in (2R)-2-phosphoglycerate binding. Glutamate 209 acts as the Proton donor in catalysis. Mg(2+) contacts are provided by aspartate 246, glutamate 291, and aspartate 318. (2R)-2-phosphoglycerate is bound by residues lysine 343, arginine 372, serine 373, and lysine 394. Lysine 343 acts as the Proton acceptor in catalysis.

Belongs to the enolase family. Component of the RNA degradosome, a multiprotein complex involved in RNA processing and mRNA degradation. It depends on Mg(2+) as a cofactor.

It is found in the cytoplasm. The protein localises to the secreted. The protein resides in the cell surface. The catalysed reaction is (2R)-2-phosphoglycerate = phosphoenolpyruvate + H2O. Its pathway is carbohydrate degradation; glycolysis; pyruvate from D-glyceraldehyde 3-phosphate: step 4/5. Catalyzes the reversible conversion of 2-phosphoglycerate (2-PG) into phosphoenolpyruvate (PEP). It is essential for the degradation of carbohydrates via glycolysis. The polypeptide is Enolase (Haemophilus ducreyi (strain 35000HP / ATCC 700724)).